A 275-amino-acid polypeptide reads, in one-letter code: Large ribosomal subunit protein uL2c (275 aa).

Disordered stretches follow at residues 36-56 (KNHR…HRGK) and 224-275 (VMNP…RKRK). Basic residues predominate over residues 255-275 (LGRKTRKKPKYSNRYILRKRK).

Belongs to the universal ribosomal protein uL2 family. As to quaternary structure, part of the 50S ribosomal subunit.

Its subcellular location is the plastid. It localises to the chloroplast. In Gracilaria tenuistipitata var. liui (Red alga), this protein is Large ribosomal subunit protein uL2c (rpl2).